The sequence spans 167 residues: Chorion class CB protein PC404 (167 aa).

The tract at residues 1-55 (IGREAIVGAGLQGPFGGPWPYDALSPFDMPYGPALPAMSCGAGSFGPSSGFAPAA) is left arm. Residues 56–126 (AYGGGLAVTS…GDGAVGIVAE (71 aa)) are central domain. The right arm stretch occupies residues 127–167 (TPFASTSVNPAYGYGGAIGGGVPYNSYGPIGYGGCGYNALY).

The protein belongs to the chorion protein family.

In terms of biological role, this protein is one of many from the eggshell of the silk moth. This chain is Chorion class CB protein PC404, found in Antheraea polyphemus (Polyphemus moth).